The following is a 466-amino-acid chain: Ribulose bisphosphate carboxylase large chain (466 aa).

An N6,N6,N6-trimethyllysine modification is found at Lys-5. The substrate site is built by Asn-114 and Thr-164. Catalysis depends on Lys-166, which acts as the Proton acceptor. Lys-168 is a binding site for substrate. Mg(2+) is bound by residues Lys-192, Asp-194, and Glu-195. Residue Lys-192 is modified to N6-carboxylysine. Residue His-285 is the Proton acceptor of the active site. 3 residues coordinate substrate: Arg-286, His-318, and Ser-370.

Belongs to the RuBisCO large chain family. Type I subfamily. In terms of assembly, heterohexadecamer of 8 large chains and 8 small chains; disulfide-linked. The disulfide link is formed within the large subunit homodimers. Mg(2+) is required as a cofactor. The disulfide bond which can form in the large chain dimeric partners within the hexadecamer appears to be associated with oxidative stress and protein turnover.

Its subcellular location is the plastid. The protein resides in the chloroplast. The catalysed reaction is 2 (2R)-3-phosphoglycerate + 2 H(+) = D-ribulose 1,5-bisphosphate + CO2 + H2O. It catalyses the reaction D-ribulose 1,5-bisphosphate + O2 = 2-phosphoglycolate + (2R)-3-phosphoglycerate + 2 H(+). RuBisCO catalyzes two reactions: the carboxylation of D-ribulose 1,5-bisphosphate, the primary event in carbon dioxide fixation, as well as the oxidative fragmentation of the pentose substrate in the photorespiration process. Both reactions occur simultaneously and in competition at the same active site. This chain is Ribulose bisphosphate carboxylase large chain, found in Isophysis tasmanica.